The chain runs to 120 residues: NAD(P)H-quinone oxidoreductase subunit 3, chloroplastic (120 aa).

Transmembrane regions (helical) follow at residues 2-22 (FLLYEYDIFWAFLIISSVIPI), 64-84 (MFALVFVVFDVETIFLYPWAL), and 88-108 (ILGVSVFIEALIFVLILVLGL).

Belongs to the complex I subunit 3 family. As to quaternary structure, NDH is composed of at least 16 different subunits, 5 of which are encoded in the nucleus.

The protein localises to the plastid. Its subcellular location is the chloroplast thylakoid membrane. The enzyme catalyses a plastoquinone + NADH + (n+1) H(+)(in) = a plastoquinol + NAD(+) + n H(+)(out). It catalyses the reaction a plastoquinone + NADPH + (n+1) H(+)(in) = a plastoquinol + NADP(+) + n H(+)(out). NDH shuttles electrons from NAD(P)H:plastoquinone, via FMN and iron-sulfur (Fe-S) centers, to quinones in the photosynthetic chain and possibly in a chloroplast respiratory chain. The immediate electron acceptor for the enzyme in this species is believed to be plastoquinone. Couples the redox reaction to proton translocation, and thus conserves the redox energy in a proton gradient. The protein is NAD(P)H-quinone oxidoreductase subunit 3, chloroplastic of Oenothera argillicola (Appalachian evening primrose).